A 1265-amino-acid chain; its full sequence is 1-phosphatidylinositol 4,5-bisphosphate phosphodiesterase gamma-2 (1265 aa).

The region spanning 20–131 (RALELGTVMT…WLSGLKILHQ (112 aa)) is the PH domain. Residues 312–456 (QDMNNPLSHY…LREKIIIKHK (145 aa)) form the PI-PLC X-box domain. Catalysis depends on residues H327 and H372. SH2 domains lie at 532-635 (WFHK…TDPV) and 646-735 (WYYD…RYPV). Y753 and Y759 each carry phosphotyrosine; by BTK. Positions 769 to 829 (MPQRTVKALY…PSNYVEDIST (61 aa)) constitute an SH3 domain. The PI-PLC Y-box domain maps to 930 to 1044 (LSDLVVYCKP…GYVLQPESMR (115 aa)). The region spanning 1038–1169 (LQPESMRTEK…SGFRSVPLKN (132 aa)) is the C2 domain. At Y1197 the chain carries Phosphotyrosine; by BTK. Phosphotyrosine occurs at positions 1217 and 1245.

As to quaternary structure, part of a complex composed of EEIG1, TNFRSF11A/RANK, PLCG2, GAB2, TEC and BTK; complex formation increases in the presence of TNFSF11/RANKL. Interacts (via SH2 domain) with CSF1R (tyrosine phosphorylated). Interacts constitutively with THEMIS2. Ca(2+) serves as cofactor. Phosphorylated on tyrosine residues by CSF1R. Phosphorylated on tyrosine residues by BTK and SYK; upon ligand-induced activation of a variety of growth factor receptors and immune system receptors. Phosphorylation leads to increased phospholipase activity.

It localises to the membrane raft. It carries out the reaction a 1,2-diacyl-sn-glycero-3-phospho-(1D-myo-inositol-4,5-bisphosphate) + H2O = 1D-myo-inositol 1,4,5-trisphosphate + a 1,2-diacyl-sn-glycerol + H(+). In terms of biological role, the production of the second messenger molecules diacylglycerol (DAG) and inositol 1,4,5-trisphosphate (IP3) is mediated by activated phosphatidylinositol-specific phospholipase C enzymes. It is a crucial enzyme in transmembrane signaling. This Homo sapiens (Human) protein is 1-phosphatidylinositol 4,5-bisphosphate phosphodiesterase gamma-2.